A 298-amino-acid chain; its full sequence is GTP cyclohydrolase FolE2 (298 aa).

Belongs to the GTP cyclohydrolase IV family.

It carries out the reaction GTP + H2O = 7,8-dihydroneopterin 3'-triphosphate + formate + H(+). It functions in the pathway cofactor biosynthesis; 7,8-dihydroneopterin triphosphate biosynthesis; 7,8-dihydroneopterin triphosphate from GTP: step 1/1. Converts GTP to 7,8-dihydroneopterin triphosphate. The sequence is that of GTP cyclohydrolase FolE2 from Neisseria meningitidis serogroup A / serotype 4A (strain DSM 15465 / Z2491).